A 125-amino-acid chain; its full sequence is Small ribosomal subunit protein bS6 (125 aa).

Belongs to the bacterial ribosomal protein bS6 family.

In terms of biological role, binds together with bS18 to 16S ribosomal RNA. The sequence is that of Small ribosomal subunit protein bS6 from Baumannia cicadellinicola subsp. Homalodisca coagulata.